We begin with the raw amino-acid sequence, 205 residues long: Microtubule-associated protein Jupiter (205 aa).

Phosphoserine is present on serine 30. Residues threonine 41, threonine 98, and threonine 102 each carry the phosphothreonine modification. The segment covering leucine 124–lysine 135 has biased composition (polar residues). A disordered region spans residues leucine 124–tryptophan 205. A compositionally biased stretch (low complexity) spans serine 136 to serine 149. Serine 138 and serine 149 each carry phosphoserine. Over residues proline 181–asparagine 191 the composition is skewed to polar residues.

This sequence belongs to the MAP Jupiter family.

Its subcellular location is the nucleus. It is found in the cytoplasm. The protein resides in the cytoskeleton. It localises to the spindle. In terms of biological role, binds to all microtubule populations. This is Microtubule-associated protein Jupiter from Drosophila virilis (Fruit fly).